Consider the following 502-residue polypeptide: Glycerol kinase (502 aa).

An ADP-binding site is contributed by Thr14. ATP-binding residues include Thr14, Thr15, and Ser16. Residue Thr14 coordinates sn-glycerol 3-phosphate. Arg18 lines the ADP pocket. Sn-glycerol 3-phosphate is bound by residues Arg84, Glu85, Tyr136, and Asp246. Residues Arg84, Glu85, Tyr136, Asp246, and Gln247 each contribute to the glycerol site. Thr268 and Gly311 together coordinate ADP. ATP is bound by residues Thr268, Gly311, Gln315, and Gly412. Residues Gly412 and Asn416 each contribute to the ADP site.

It belongs to the FGGY kinase family.

The enzyme catalyses glycerol + ATP = sn-glycerol 3-phosphate + ADP + H(+). It functions in the pathway polyol metabolism; glycerol degradation via glycerol kinase pathway; sn-glycerol 3-phosphate from glycerol: step 1/1. Its activity is regulated as follows. Inhibited by fructose 1,6-bisphosphate (FBP). In terms of biological role, key enzyme in the regulation of glycerol uptake and metabolism. Catalyzes the phosphorylation of glycerol to yield sn-glycerol 3-phosphate. This is Glycerol kinase from Pasteurella multocida (strain Pm70).